A 260-amino-acid polypeptide reads, in one-letter code: Glutathione S-transferase domain-containing protein DDB_G0274223 (260 aa).

Residues 7-96 (KVDYIFYTNN…YLAQKYNTFL (90 aa)) form the GST N-terminal domain. Residues 102-233 (NPHENSDVIT…GFKTFNPSAL (132 aa)) enclose the GST C-terminal domain.

It belongs to the GST superfamily.

In Dictyostelium discoideum (Social amoeba), this protein is Glutathione S-transferase domain-containing protein DDB_G0274223.